The sequence spans 306 residues: Manganese-binding lipoprotein MntA (306 aa).

Residues 1-18 (MRQGLMAAVLFATFALTG) form the signal peptide. Residue Cys-19 is the site of N-palmitoyl cysteine attachment. The S-diacylglycerol cysteine moiety is linked to residue Cys-19. Mn(2+) is bound by residues His-66, His-132, His-198, and Asp-278.

This sequence belongs to the bacterial solute-binding protein 9 family. As to quaternary structure, the complex is probably composed of two ATP-binding proteins (MntB), two transmembrane proteins (MntC and MntD) and a solute-binding protein (MntA). Interacts with FloT.

The protein resides in the cell membrane. It localises to the membrane raft. In terms of biological role, probably part of ATP-binding cassette (ABC) transport system MntABCD involved in manganese import. Binds manganese and delivers it to the membrane permease for translocation into the cytoplasm. This chain is Manganese-binding lipoprotein MntA, found in Bacillus subtilis (strain 168).